The following is a 216-amino-acid chain: Uracil phosphoribosyltransferase (216 aa).

30–34 serves as a coordination point for GTP; the sequence is KTLVR. 5-phospho-alpha-D-ribose 1-diphosphate contacts are provided by residues arginine 80, arginine 105, and 140–148; that span reads DPMIATAST. Uracil is bound by residues isoleucine 203 and 208-210; that span reads GDA. Aspartate 209 is a 5-phospho-alpha-D-ribose 1-diphosphate binding site.

The protein belongs to the UPRTase family. Mg(2+) is required as a cofactor.

The catalysed reaction is UMP + diphosphate = 5-phospho-alpha-D-ribose 1-diphosphate + uracil. The protein operates within pyrimidine metabolism; UMP biosynthesis via salvage pathway; UMP from uracil: step 1/1. Allosterically activated by GTP. Functionally, catalyzes the conversion of uracil and 5-phospho-alpha-D-ribose 1-diphosphate (PRPP) to UMP and diphosphate. The polypeptide is Uracil phosphoribosyltransferase (Sulfurisphaera tokodaii (strain DSM 16993 / JCM 10545 / NBRC 100140 / 7) (Sulfolobus tokodaii)).